Reading from the N-terminus, the 349-residue chain is UPF0324 inner membrane protein YeiH (349 aa).

Residues 1 to 12 (MTELTLQNHCRT) lie on the Periplasmic side of the membrane. The chain crosses the membrane as a helical span at residues 13-35 (MWHFIPGLALSAVITGVALWGGA). Residues 36-38 (IPA) lie on the Cytoplasmic side of the membrane. Residues 39-61 (VAGAGFSALTLAILLGMVIGNTI) traverse the membrane as a helical segment. Topologically, residues 62–99 (YPQIWKQCDGGVLFAKQHLLRLGIILYGFRLTFSQIAD) are periplasmic. A helical membrane pass occupies residues 100-122 (VGISGIVIDVLTLSSTFMLACFL). The Cytoplasmic portion of the chain corresponds to 123–131 (GQKVFGLDR). A helical transmembrane segment spans residues 132–151 (HTSWLIGAGSSICGAAAVLA). The Periplasmic portion of the chain corresponds to 152-162 (TEPVVKAEASK). The chain crosses the membrane as a helical span at residues 163–185 (VTVAVATVVIFGTIAIFLYPAMY). Topologically, residues 186-261 (PLLAHWFSPE…SPATGAEKSK (76 aa)) are cytoplasmic. Residues 262-284 (ITIPWFAIFFIVVAIFNSFHLLP) form a helical membrane-spanning segment. Residues 285-290 (KAVVDM) are Periplasmic-facing. Residues 291–313 (LVTLDTVLLAMAMAALGLTTHVS) form a helical membrane-spanning segment. The Cytoplasmic portion of the chain corresponds to 314 to 322 (ALKKAGAKP). The helical transmembrane segment at 323-345 (LLMALALFAWLIIGGGAINVLIH) threads the bilayer. The Periplasmic segment spans residues 346–349 (SLIA).

Belongs to the UPF0324 family.

It localises to the cell inner membrane. This is UPF0324 inner membrane protein YeiH (yeiH) from Salmonella typhimurium (strain LT2 / SGSC1412 / ATCC 700720).